Reading from the N-terminus, the 286-residue chain is UDP-3-O-acyl-N-acetylglucosamine deacetylase (286 aa).

Zn(2+) contacts are provided by H79, H237, and D241. The active-site Proton donor is H264.

Belongs to the LpxC family. Zn(2+) is required as a cofactor.

It carries out the reaction a UDP-3-O-[(3R)-3-hydroxyacyl]-N-acetyl-alpha-D-glucosamine + H2O = a UDP-3-O-[(3R)-3-hydroxyacyl]-alpha-D-glucosamine + acetate. It participates in glycolipid biosynthesis; lipid IV(A) biosynthesis; lipid IV(A) from (3R)-3-hydroxytetradecanoyl-[acyl-carrier-protein] and UDP-N-acetyl-alpha-D-glucosamine: step 2/6. In terms of biological role, catalyzes the hydrolysis of UDP-3-O-myristoyl-N-acetylglucosamine to form UDP-3-O-myristoylglucosamine and acetate, the committed step in lipid A biosynthesis. In Chlamydia trachomatis serovar L2 (strain ATCC VR-902B / DSM 19102 / 434/Bu), this protein is UDP-3-O-acyl-N-acetylglucosamine deacetylase.